The chain runs to 833 residues: Ventricular zone-expressed PH domain-containing protein homolog 1 (833 aa).

The interval 201–319 (TELLALMSQL…TYLVSQLANM (119 aa)) is interaction with TGFBR1. The disordered stretch occupies residues 458–505 (KGVGSDDGEDENRGDIPASISLSEIDPLGQGNDKLPFKTDTERSQLGE). A compositionally biased stretch (basic and acidic residues) spans 492–502 (LPFKTDTERSQ). The interaction with TGFBR1 stretch occupies residues 663–833 (ESTFPQQKDL…RESREVTTYL (171 aa)). One can recognise a PH domain in the interval 716-819 (QPLIEGKLKE…WLQCINVAVA (104 aa)).

The protein belongs to the MELT/VEPH family. Interacts with TGFBR1.

Its subcellular location is the cell membrane. Its function is as follows. Interacts with TGF-beta receptor type-1 (TGFBR1) and inhibits dissociation of activated SMAD2 from TGFBR1, impeding its nuclear accumulation and resulting in impaired TGF-beta signaling. May also affect FOXO, Hippo and Wnt signaling. The polypeptide is Ventricular zone-expressed PH domain-containing protein homolog 1 (VEPH1) (Homo sapiens (Human)).